Here is a 236-residue protein sequence, read N- to C-terminus: uncharacterized protein (236 aa).

Helical transmembrane passes span 32-52 (MALALLLTGVAAITTISVEPI), 61-81 (FGTIIMFAPLGIALYFFMGFG), 90-110 (ILFWVYAGLTGMSLSYLALIY), 115-135 (IARTFFICSSVFGAMSLYGYS), 144-164 (GSFFAMGLIGLIIASLVNLFL), 167-187 (SSLSFATSLIGIVVFMGLIAW), and 208-228 (LSIMAAFTLYLDFINLFLYLM).

The protein belongs to the BI1 family.

It is found in the cell membrane. This is an uncharacterized protein from Rickettsia prowazekii (strain Madrid E).